Consider the following 68-residue polypeptide: Ribosome modulation factor (68 aa).

Belongs to the ribosome modulation factor family.

It localises to the cytoplasm. In terms of biological role, during stationary phase, converts 70S ribosomes to an inactive dimeric form (100S ribosomes). This Saccharophagus degradans (strain 2-40 / ATCC 43961 / DSM 17024) protein is Ribosome modulation factor.